A 211-amino-acid chain; its full sequence is Large ribosomal subunit protein uL3 (211 aa).

Position 150 is an N5-methylglutamine (Q150).

It belongs to the universal ribosomal protein uL3 family. In terms of assembly, part of the 50S ribosomal subunit. Forms a cluster with proteins L14 and L19. Post-translationally, methylated by PrmB.

Its function is as follows. One of the primary rRNA binding proteins, it binds directly near the 3'-end of the 23S rRNA, where it nucleates assembly of the 50S subunit. The chain is Large ribosomal subunit protein uL3 from Pseudomonas fluorescens (strain Pf0-1).